The sequence spans 439 residues: Proline--tRNA ligase (439 aa).

The protein belongs to the class-II aminoacyl-tRNA synthetase family. ProS type 2 subfamily. As to quaternary structure, homodimer.

The protein resides in the cytoplasm. It catalyses the reaction tRNA(Pro) + L-proline + ATP = L-prolyl-tRNA(Pro) + AMP + diphosphate. Catalyzes the attachment of proline to tRNA(Pro) in a two-step reaction: proline is first activated by ATP to form Pro-AMP and then transferred to the acceptor end of tRNA(Pro). This is Proline--tRNA ligase from Rhodopseudomonas palustris (strain BisB5).